Consider the following 504-residue polypeptide: Anaerobic nitric oxide reductase transcription regulator NorR (504 aa).

D57 carries the post-translational modification 4-aspartylphosphate. The region spanning 187–416 (MIGLSPGMTQ…LEHAIHRAVV (230 aa)) is the Sigma-54 factor interaction domain. Residues 215–222 (GETGTGKE) and 278–287 (ADNGTLFLDE) contribute to the ATP site. A DNA-binding region (H-T-H motif) is located at residues 479–498 (WAACARMLETDVANLHRLAK).

The protein operates within nitrogen metabolism; nitric oxide reduction. In terms of biological role, required for the expression of anaerobic nitric oxide (NO) reductase, acts as a transcriptional activator for at least the norVW operon. Activation also requires sigma-54. The protein is Anaerobic nitric oxide reductase transcription regulator NorR of Escherichia coli O8 (strain IAI1).